A 128-amino-acid chain; its full sequence is Small ribosomal subunit protein eS8 (128 aa).

This sequence belongs to the eukaryotic ribosomal protein eS8 family. In terms of assembly, part of the 30S ribosomal subunit.

This Methanococcus maripaludis (strain C6 / ATCC BAA-1332) protein is Small ribosomal subunit protein eS8.